A 421-amino-acid polypeptide reads, in one-letter code: Serine hydroxymethyltransferase (421 aa).

(6S)-5,6,7,8-tetrahydrofolate-binding positions include leucine 121 and 125–127 (GHL). An N6-(pyridoxal phosphate)lysine modification is found at lysine 230.

Belongs to the SHMT family. In terms of assembly, homodimer. Pyridoxal 5'-phosphate is required as a cofactor.

It is found in the cytoplasm. The catalysed reaction is (6R)-5,10-methylene-5,6,7,8-tetrahydrofolate + glycine + H2O = (6S)-5,6,7,8-tetrahydrofolate + L-serine. It functions in the pathway one-carbon metabolism; tetrahydrofolate interconversion. The protein operates within amino-acid biosynthesis; glycine biosynthesis; glycine from L-serine: step 1/1. Its function is as follows. Catalyzes the reversible interconversion of serine and glycine with tetrahydrofolate (THF) serving as the one-carbon carrier. This reaction serves as the major source of one-carbon groups required for the biosynthesis of purines, thymidylate, methionine, and other important biomolecules. Also exhibits THF-independent aldolase activity toward beta-hydroxyamino acids, producing glycine and aldehydes, via a retro-aldol mechanism. This chain is Serine hydroxymethyltransferase, found in Carboxydothermus hydrogenoformans (strain ATCC BAA-161 / DSM 6008 / Z-2901).